A 365-amino-acid chain; its full sequence is Galactoside alpha-(1,2)-fucosyltransferase 1 (365 aa).

Residues 1 to 8 are Cytoplasmic-facing; the sequence is MWVPSRRH. The helical; Signal-anchor for type II membrane protein transmembrane segment at 9–28 threads the bilayer; that stretch reads LCLTFLLVCVLAAIFFLNVY. Over 29-365 the chain is Lumenal; that stretch reads QDLFYSGLDL…LSPLQMLAGP (337 aa). N-linked (GlcNAc...) asparagine glycans are attached at residues Asn65, Asn301, and Asn327.

Belongs to the glycosyltransferase 11 family.

Its subcellular location is the golgi apparatus. The protein resides in the golgi stack membrane. It catalyses the reaction a beta-D-galactosyl-(1-&gt;4)-N-acetyl-beta-D-glucosaminyl derivative + GDP-beta-L-fucose = an alpha-L-Fuc-(1-&gt;2)-beta-D-Gal-(1-&gt;4)-beta-D-GlcNAc derivative + GDP + H(+). The catalysed reaction is a ganglioside GA1 + GDP-beta-L-fucose = a ganglioside Fuc-GA1 + GDP + H(+). The enzyme catalyses a beta-D-Gal-(1-&gt;3)-beta-D-GlcNAc-(1-&gt;3)-beta-D-Gal-(1-&gt;4)-beta-D-Glc-(1&lt;-&gt;1')-Cer(d18:1(4E)) + GDP-beta-L-fucose = alpha-L-fucosyl-(1-&gt;2)- beta-D-galactosyl-(1-&gt;3)-N-acetyl-beta-D-glucosaminyl-(1-&gt;3)-beta-D-galactosyl-(1-&gt;4)-beta-D-glucosyl-(1&lt;-&gt;1')-N-acylsphing-4-enine + GDP + H(+). It carries out the reaction a neolactoside nLc4Cer(d18:1(4E)) + GDP-beta-L-fucose = a neolactoside IV(2)-alpha-Fuc-nLc4Cer(d18:1(4E)) + GDP + H(+). It catalyses the reaction a ganglioside GM1 + GDP-beta-L-fucose = a ganglioside Fuc-GM1 + GDP + H(+). The catalysed reaction is beta-D-galactosyl-(1-&gt;3)-N-acetyl-D-galactosamine + GDP-beta-L-fucose = alpha-L-fucosyl-(1-&gt;2)-beta-D-galactosyl-(1-&gt;3)-N-acetyl-D-galactosamine + GDP + H(+). Its pathway is protein modification; protein glycosylation. Functionally, catalyzes the transfer of L-fucose, from a guanosine diphosphate-beta-L-fucose, to the terminal galactose residue of glycoconjugates through an alpha(1,2) linkage leading to H antigen synthesis that is an intermediate substrate in the synthesis of ABO blood group antigens. H antigen is essential for maturation of the glomerular layer of the main olfactory bulb, in cell migration and early cell-cell contacts during tumor associated angiogenesis. Preferentially fucosylates soluble lactose and to a lesser extent fucosylates glycolipids gangliosides GA1 and GM1a. The protein is Galactoside alpha-(1,2)-fucosyltransferase 1 of Sus scrofa (Pig).